The primary structure comprises 375 residues: Chaperone protein DnaJ 1 (375 aa).

The J domain maps to 4–68 (DYYAILGVER…EKRRIVDMGG (65 aa)). The CR-type zinc finger occupies 127-209 (GTKKPITIDT…CGGDGRVRTQ (83 aa)). Residues C140, C143, C157, C160, C183, C186, C197, and C200 each coordinate Zn(2+). CXXCXGXG motif repeat units lie at residues 140–147 (CDRCEGTG), 157–164 (CSTCNGSG), 183–190 (CPTCRGTG), and 197–204 (CDKCGGDG).

It belongs to the DnaJ family. In terms of assembly, homodimer. Zn(2+) is required as a cofactor.

It localises to the cytoplasm. In terms of biological role, participates actively in the response to hyperosmotic and heat shock by preventing the aggregation of stress-denatured proteins and by disaggregating proteins, also in an autonomous, DnaK-independent fashion. Unfolded proteins bind initially to DnaJ; upon interaction with the DnaJ-bound protein, DnaK hydrolyzes its bound ATP, resulting in the formation of a stable complex. GrpE releases ADP from DnaK; ATP binding to DnaK triggers the release of the substrate protein, thus completing the reaction cycle. Several rounds of ATP-dependent interactions between DnaJ, DnaK and GrpE are required for fully efficient folding. Also involved, together with DnaK and GrpE, in the DNA replication of plasmids through activation of initiation proteins. The chain is Chaperone protein DnaJ 1 from Corynebacterium diphtheriae (strain ATCC 700971 / NCTC 13129 / Biotype gravis).